The primary structure comprises 176 residues: Inorganic pyrophosphatase (176 aa).

Substrate contacts are provided by K30, R44, and Y56. D66, D71, and D103 together coordinate Mg(2+). Y142 contributes to the substrate binding site.

It belongs to the PPase family. Homohexamer. Mg(2+) is required as a cofactor.

The protein resides in the cytoplasm. The enzyme catalyses diphosphate + H2O = 2 phosphate + H(+). Functionally, catalyzes the hydrolysis of inorganic pyrophosphate (PPi) forming two phosphate ions. The protein is Inorganic pyrophosphatase of Vibrio cholerae serotype O1 (strain ATCC 39315 / El Tor Inaba N16961).